The primary structure comprises 391 residues: MNKIGVLLMNLGGPERITDVGPFLYNLFSDPEIIRTPFPAFQKPLAWLISTLRSTTSQQAYLSIGGGSPIRRITEQQARELQSKLREKGLNATTYIAMRYWHPFTESAIADMKADCVDQIVVLPLYPHFSISTSGSSFRELKKLRDSDNDFKKIPMRCVRSWFSQSGYLKSMVELISQQISCCESPPNAHIFFTAHGVPKSYVEEAGDPYKQQIEDCSLLIINELEKYLGHSNPHTLSYQSRVGPVEWLKPYTEEVLADLGKSNVEDLIVVPISFVGEHIETLQEIDIEYKEIAEKAGIKNFRRVKALNTHPTFIEGLSDLVISCLEEPQVNIEEASKLPEKVKLYPQEKWQWGWNNSSEVWNGRVAMIVFLVLFIELIAGSGPLHRLGIL.

Positions 196 and 281 each coordinate Fe cation.

Belongs to the ferrochelatase family.

The protein resides in the cytoplasm. It carries out the reaction heme b + 2 H(+) = protoporphyrin IX + Fe(2+). It participates in porphyrin-containing compound metabolism; protoheme biosynthesis; protoheme from protoporphyrin-IX: step 1/1. Functionally, catalyzes the ferrous insertion into protoporphyrin IX. The protein is Ferrochelatase of Prochlorococcus marinus (strain MIT 9312).